The chain runs to 269 residues: Thymidylate synthase (269 aa).

Arg21 contributes to the dUMP binding site. Residue His51 participates in (6R)-5,10-methylene-5,6,7,8-tetrahydrofolate binding. Position 126–127 (126–127 (RR)) interacts with dUMP. The Nucleophile role is filled by Cys146. DUMP is bound by residues 171 to 174 (RSGD), Asn182, and 212 to 214 (HLY). Residue Asp174 coordinates (6R)-5,10-methylene-5,6,7,8-tetrahydrofolate. (6R)-5,10-methylene-5,6,7,8-tetrahydrofolate is bound at residue Ala268.

Belongs to the thymidylate synthase family. Bacterial-type ThyA subfamily. In terms of assembly, homodimer.

Its subcellular location is the cytoplasm. The catalysed reaction is dUMP + (6R)-5,10-methylene-5,6,7,8-tetrahydrofolate = 7,8-dihydrofolate + dTMP. The protein operates within pyrimidine metabolism; dTTP biosynthesis. Catalyzes the reductive methylation of 2'-deoxyuridine-5'-monophosphate (dUMP) to 2'-deoxythymidine-5'-monophosphate (dTMP) while utilizing 5,10-methylenetetrahydrofolate (mTHF) as the methyl donor and reductant in the reaction, yielding dihydrofolate (DHF) as a by-product. This enzymatic reaction provides an intracellular de novo source of dTMP, an essential precursor for DNA biosynthesis. This is Thymidylate synthase from Methylocella silvestris (strain DSM 15510 / CIP 108128 / LMG 27833 / NCIMB 13906 / BL2).